The sequence spans 292 residues: Homoserine kinase (292 aa).

Position 84-94 (Pro84–Ala94) interacts with ATP.

The protein belongs to the GHMP kinase family. Homoserine kinase subfamily.

The protein localises to the cytoplasm. The enzyme catalyses L-homoserine + ATP = O-phospho-L-homoserine + ADP + H(+). The protein operates within amino-acid biosynthesis; L-threonine biosynthesis; L-threonine from L-aspartate: step 4/5. In terms of biological role, catalyzes the ATP-dependent phosphorylation of L-homoserine to L-homoserine phosphate. The protein is Homoserine kinase of Campylobacter hominis (strain ATCC BAA-381 / DSM 21671 / CCUG 45161 / LMG 19568 / NCTC 13146 / CH001A).